Consider the following 242-residue polypeptide: uncharacterized protein (242 aa).

Residues 2–62 enclose the S4 RNA-binding domain; it reads EKAYKLLSVQ…VEKPSVIFED (61 aa). Asp-93 is a catalytic residue.

It belongs to the pseudouridine synthase RluA family.

The enzyme catalyses a uridine in RNA = a pseudouridine in RNA. This is an uncharacterized protein from Helicobacter pylori (strain J99 / ATCC 700824) (Campylobacter pylori J99).